Reading from the N-terminus, the 100-residue chain is High mobility group protein C (100 aa).

The HMG box DNA-binding region spans Pro-12–Glu-80. The segment at Lys-81–Lys-100 is disordered. Residues Lys-90 to Lys-100 are compositionally biased toward basic residues.

Its subcellular location is the nucleus. It localises to the chromosome. This Tetrahymena thermophila protein is High mobility group protein C.